A 260-amino-acid chain; its full sequence is Type III pantothenate kinase (260 aa).

6 to 13 (DVGNTNIT) serves as a coordination point for ATP. 107–110 (GADR) provides a ligand contact to substrate. Catalysis depends on Asp109, which acts as the Proton acceptor. Residue Asp129 coordinates K(+). Thr132 is a binding site for ATP. Thr184 serves as a coordination point for substrate.

It belongs to the type III pantothenate kinase family. As to quaternary structure, homodimer. It depends on NH4(+) as a cofactor. K(+) is required as a cofactor.

The protein localises to the cytoplasm. It catalyses the reaction (R)-pantothenate + ATP = (R)-4'-phosphopantothenate + ADP + H(+). Its pathway is cofactor biosynthesis; coenzyme A biosynthesis; CoA from (R)-pantothenate: step 1/5. Catalyzes the phosphorylation of pantothenate (Pan), the first step in CoA biosynthesis. The chain is Type III pantothenate kinase from Agathobacter rectalis (strain ATCC 33656 / DSM 3377 / JCM 17463 / KCTC 5835 / VPI 0990) (Eubacterium rectale).